The chain runs to 745 residues: Copper-transporting ATPase (745 aa).

One can recognise an HMA domain in the interval methionine 1–lysine 67. The Cytoplasmic segment spans residues methionine 1–lysine 83. Positions 12 and 15 each coordinate Cu cation. The helical transmembrane segment at leucine 84–serine 104 threads the bilayer. The Extracellular portion of the chain corresponds to proline 105–alanine 124. A helical membrane pass occupies residues cysteine 125 to glutamine 144. Topologically, residues glycine 145–histidine 151 are cytoplasmic. Residues arginine 152–leucine 172 form a helical membrane-spanning segment. The Extracellular portion of the chain corresponds to tryptophan 173–phenylalanine 194. A helical transmembrane segment spans residues glutamate 195–lysine 215. The Cytoplasmic segment spans residues aspartate 216–lysine 343. Residues valine 344–isoleucine 366 traverse the membrane as a helical segment. The Extracellular segment spans residues alanine 367–alanine 379. Residues leucine 380 to leucine 397 traverse the membrane as a helical segment. Over alanine 398 to isoleucine 685 the chain is Cytoplasmic. Aspartate 435 (4-aspartylphosphate intermediate) is an active-site residue. Positions 631 and 635 each coordinate Mg(2+). Residues lysine 686 to glycine 705 traverse the membrane as a helical segment. At valine 706–proline 716 the chain is on the extracellular side. Residues alanine 717–glutamine 735 form a helical membrane-spanning segment. Over arginine 736–histidine 745 the chain is Cytoplasmic.

The protein belongs to the cation transport ATPase (P-type) (TC 3.A.3) family. Type IB subfamily.

It localises to the cell membrane. It catalyses the reaction Cu(2+)(in) + ATP + H2O = Cu(2+)(out) + ADP + phosphate + H(+). In terms of biological role, probably involved in copper export. The protein is Copper-transporting ATPase (copA) of Helicobacter pylori (strain J99 / ATCC 700824) (Campylobacter pylori J99).